Consider the following 308-residue polypeptide: Probable GTP 3',8-cyclase (308 aa).

A Radical SAM core domain is found at 4–224 (RFGRPLEDLR…QIRKKHFRPR (221 aa)). A GTP-binding site is contributed by arginine 13. Residues cysteine 20, cysteine 24, and cysteine 27 each contribute to the [4Fe-4S] cluster site. Residue lysine 60 participates in GTP binding. Glycine 64 is an S-adenosyl-L-methionine binding site. Threonine 90 serves as a coordination point for GTP. Serine 114 is an S-adenosyl-L-methionine binding site. Residue lysine 151 participates in GTP binding. [4Fe-4S] cluster-binding residues include cysteine 245 and cysteine 248. Position 250-252 (250-252 (RIR)) interacts with GTP. Cysteine 262 contributes to the [4Fe-4S] cluster binding site.

This sequence belongs to the radical SAM superfamily. MoaA family. [4Fe-4S] cluster is required as a cofactor.

The catalysed reaction is GTP + AH2 + S-adenosyl-L-methionine = (8S)-3',8-cyclo-7,8-dihydroguanosine 5'-triphosphate + 5'-deoxyadenosine + L-methionine + A + H(+). The protein operates within cofactor biosynthesis; molybdopterin biosynthesis. In terms of biological role, catalyzes the cyclization of GTP to (8S)-3',8-cyclo-7,8-dihydroguanosine 5'-triphosphate. The chain is Probable GTP 3',8-cyclase from Saccharolobus islandicus (strain Y.N.15.51 / Yellowstone #2) (Sulfolobus islandicus).